The following is a 179-amino-acid chain: Large ribosomal subunit protein uL5 (179 aa).

It belongs to the universal ribosomal protein uL5 family. As to quaternary structure, part of the 50S ribosomal subunit; part of the 5S rRNA/L5/L18/L25 subcomplex. Contacts the 5S rRNA and the P site tRNA. Forms a bridge to the 30S subunit in the 70S ribosome.

Its function is as follows. This is one of the proteins that bind and probably mediate the attachment of the 5S RNA into the large ribosomal subunit, where it forms part of the central protuberance. In the 70S ribosome it contacts protein S13 of the 30S subunit (bridge B1b), connecting the 2 subunits; this bridge is implicated in subunit movement. Contacts the P site tRNA; the 5S rRNA and some of its associated proteins might help stabilize positioning of ribosome-bound tRNAs. This Vibrio atlanticus (strain LGP32) (Vibrio splendidus (strain Mel32)) protein is Large ribosomal subunit protein uL5.